A 396-amino-acid chain; its full sequence is MQTPKSRPGSLELPQKKSPLPAPKVVRRLKPSGAESDPKTKTISKTQIPKVVADRRSARIPLNEIQKKRTGRIPELESTISQLQEELKKAKEELNRSEALKREAQEEAEDAKHQLMDINASEDSRIEELRKLSQERDKTWQSELEAMQRQHGMDSTALSSAINEVQKLKSKLFESESELEQSKYEVRSLEKLVRQLEEERVNSRDSSSSMEVEELKEAMNLSRQEITQLKSAVEAAETRYQEEYIQSTLQIRSAYEQTEAVKSRYSQREAELTEELNRTKDEIEGLRKELMEKVKEDESTGDLKKLESDLMEVRGSLMDKEMELQILRSAMEKKVETANTEAMEAELKRVKIQCEQWRKAAETAASILNNDEERTDSIETSKMLKKFGVLLKKNHK.

Disordered regions lie at residues 1 to 49 (MQTP…TQIP) and 99 to 122 (ALKREAQEEAEDAKHQLMDINASE). Coiled-coil stretches lie at residues 67–124 (KKRT…SEDS) and 158–366 (LSSA…TAAS). A compositionally biased stretch (basic and acidic residues) spans 99-115 (ALKREAQEEAEDAKHQL).

This sequence belongs to the ICR family. Component of the active ARAC10-IRC5-KIN13A complex. Homooligomer. Interacts (via C-terminus) with ARAC4, ARAC10, ARAC11 and (via N-terminus) with KIN13A (via C-terminus), but no interactions with SEC3A. As to expression, expressed in xylem cells in the roots and in stamens, petals and pollen.

The protein resides in the cell membrane. The protein localises to the cytoplasm. Its subcellular location is the cytoskeleton. ROP effector binding specifically activated ROPs and linking them to the microtubule cytoskeleton. Involved in ROP-regulated polar growth. Involved in local disassembly of cortical microtubules when associated with ARAC10 and KIN13A and conversely also mediates the elimination of ARAC10 from the plasma membrane by the cortical microtubules. Accumulates at the plus end of shrinking microtubules. Targets KIN13A to microtubules. The polypeptide is Interactor of constitutive active ROPs 5 (ICR5) (Arabidopsis thaliana (Mouse-ear cress)).